The sequence spans 632 residues: Probable potassium transport system protein Kup 2 (632 aa).

A run of 12 helical transmembrane segments spans residues 19 to 39 (FWGLTLGSIGVVFGDIGTSPL), 58 to 78 (MIVLGVLSLILWSLFIVVTAK), 110 to 130 (MFLMSLGVIGASMFIGDSMIT), 147 to 167 (PALEHYVVPLTVFILVVLFAV), 178 to 198 (AFGPVMVLWFASLAVMGIVHI), 216 to 236 (FLLSHGTIGLVTLGAVFLAVT), 257 to 277 (WLFFVLPSLLINYFGQGALVL), 290 to 310 (MVPELLLLPLVVLATAATVIA), 347 to 367 (IYLPRVNRLLLIGVMLLVLLF), 377 to 397 (YGIAVSTTMVADGIMGFVVIW), 404 to 424 (AAVAAAIIVPFVIVDLSFFSA), and 429 to 449 (LFEGAWVPLLFGAAMAVTIWT).

This sequence belongs to the HAK/KUP transporter (TC 2.A.72) family.

It is found in the cell inner membrane. It catalyses the reaction K(+)(in) + H(+)(in) = K(+)(out) + H(+)(out). Its function is as follows. Transport of potassium into the cell. Likely operates as a K(+):H(+) symporter. The sequence is that of Probable potassium transport system protein Kup 2 from Bradyrhizobium sp. (strain BTAi1 / ATCC BAA-1182).